The primary structure comprises 600 residues: Aspartate--tRNA(Asp/Asn) ligase (600 aa).

L-aspartate is bound at residue Glu-181. The tract at residues Gln-205–Lys-208 is aspartate. Residue Arg-227 coordinates L-aspartate. ATP is bound by residues Arg-227–Glu-229 and Gln-236. His-455 is an L-aspartate binding site. Position 489 (Glu-489) interacts with ATP. Residue Arg-496 participates in L-aspartate binding. Gly-541–Arg-544 contributes to the ATP binding site.

This sequence belongs to the class-II aminoacyl-tRNA synthetase family. Type 1 subfamily. As to quaternary structure, homodimer.

Its subcellular location is the cytoplasm. The catalysed reaction is tRNA(Asx) + L-aspartate + ATP = L-aspartyl-tRNA(Asx) + AMP + diphosphate. Functionally, aspartyl-tRNA synthetase with relaxed tRNA specificity since it is able to aspartylate not only its cognate tRNA(Asp) but also tRNA(Asn). Reaction proceeds in two steps: L-aspartate is first activated by ATP to form Asp-AMP and then transferred to the acceptor end of tRNA(Asp/Asn). The chain is Aspartate--tRNA(Asp/Asn) ligase from Rubrobacter xylanophilus (strain DSM 9941 / JCM 11954 / NBRC 16129 / PRD-1).